The sequence spans 267 residues: Adenosine 5'-phosphosulfate reductase (267 aa).

The interval 1–29 (MPPFATIPATERNSAAQHQDPSPMSQPFD) is disordered. A compositionally biased stretch (polar residues) spans 11–25 (ERNSAAQHQDPSPMS). 4 residues coordinate [4Fe-4S] cluster: Cys139, Cys140, Cys228, and Cys231. Cys256 acts as the Nucleophile; cysteine thiosulfonate intermediate in catalysis.

Belongs to the PAPS reductase family. CysH subfamily. The cofactor is [4Fe-4S] cluster.

Its subcellular location is the cytoplasm. It catalyses the reaction [thioredoxin]-disulfide + sulfite + AMP + 2 H(+) = adenosine 5'-phosphosulfate + [thioredoxin]-dithiol. It functions in the pathway sulfur metabolism; hydrogen sulfide biosynthesis; sulfite from sulfate. In terms of biological role, catalyzes the formation of sulfite from adenosine 5'-phosphosulfate (APS) using thioredoxin as an electron donor. This chain is Adenosine 5'-phosphosulfate reductase, found in Pseudomonas aeruginosa (strain LESB58).